We begin with the raw amino-acid sequence, 732 residues long: MEFETHEDAYLFYKDYAKSVGFGTAKLSSRRSRASKEFIDAKFSCIRYGSKQQSDDAINPRASPKIGCKASMHVKRRPDGKWYVYSFVKEHNHDLLPEQAHYFRSHRNTELVKSNDSRLRRKKNTPLTDCKHLSAYHDLDFIDGYMRNQHDKGRRLVLDTGDAEILLEFLMRMQEENPKFFFAVDFSEDHLLRNVFWVDAKGIEDYKSFSDVVSFETSYFVSKYKVPLVLFVGVNHHVQPVLLGCGLLADDTVYTYVWLMQSWLVAMGGQKPKVMLTDQNNAIKAAIAAVLPETRHCYCLWHVLDQLPRNLDYWSMWQDTFMKKLFKCIYRSWSEEEFDRRWLKLIDKFHLRDVPWMRSLYEERKFWAPTFMRGITFAGLSMRCRSESVNSLFDRYVHPETSLKEFLEGYGLMLEDRYEEEAKADFDAWHEAPELKSPSPFEKQMLLVYSHEIFRRFQLEVLGAAACHLTKESEEGTTYSVKDFDDEQKYLVDWDEFKSDIYCSCRSFEYKGYLCRHAIVVLQMSGVFTIPINYVLQRWTNAARNRHQISRNLELVQSNIRRFNDLCRRAIILGEEGSLSQESYDIAMFAMKEAFKQCAVTINTIKHPARCEEAAIQAGDPVQEENQYGSTSTQIGPEPNIHAGNVPWQAETRREKRSSLNNTSKKAKHVAQSETVGEGSQEGFQHVADPRQSQAVLAGQFHNTMPGVFQNLINTNFQNIPATNMHQNNPPG.

The 87-residue stretch at Leu11–Pro97 folds into the FAR1 domain. The MULE domain maps to Val212–Pro308. Residues Tyr490–Gly526 form an SWIM-type zinc finger. The disordered stretch occupies residues Gln623 to Gly683. The segment covering Glu624 to Ile635 has biased composition (polar residues).

This sequence belongs to the FHY3/FAR1 family. In terms of tissue distribution, expressed in hypocotyls, rosette and cauline leaves, inflorescences stems, flowers and siliques.

Its subcellular location is the nucleus. Putative transcription activator involved in regulating light control of development. The sequence is that of Protein FAR1-RELATED SEQUENCE 4 (FRS4) from Arabidopsis thaliana (Mouse-ear cress).